We begin with the raw amino-acid sequence, 258 residues long: Type III pantothenate kinase 1 (258 aa).

6-13 contacts ATP; it reads DMGNSHIH. 107–110 is a binding site for substrate; sequence GADR. Asp109 (proton acceptor) is an active-site residue. K(+) is bound at residue Asp130. Thr133 lines the ATP pocket. Substrate is bound at residue Thr185.

This sequence belongs to the type III pantothenate kinase family. As to quaternary structure, homodimer. The cofactor is NH4(+). K(+) is required as a cofactor.

The protein resides in the cytoplasm. The catalysed reaction is (R)-pantothenate + ATP = (R)-4'-phosphopantothenate + ADP + H(+). Its pathway is cofactor biosynthesis; coenzyme A biosynthesis; CoA from (R)-pantothenate: step 1/5. Catalyzes the phosphorylation of pantothenate (Pan), the first step in CoA biosynthesis. The protein is Type III pantothenate kinase 1 of Francisella tularensis subsp. tularensis (strain FSC 198).